We begin with the raw amino-acid sequence, 932 residues long: MQSVNIVSTNYSRYGVSVYDRLYRKDKNVSAKHRPSSTGVYGHDASTVDHASRSNNNLNLTRSTSAISESDDVATISTNNSRRSVIKRKYKSLITASSKKLITKLYEHGSNSDSFSIFSHKTSQSHHPAQRLGTEEDLIINDLFKRKEISDLPDEVLRNILSNVKDDQRTLVNCLYVNKAFYNATKPTLYERPKFTSTYRVAQFVTSIRTNPQNGLYVRELDLSKLKNGSLNGKSTSNTGVVADSPDVDEYNPMRTRTGSVTSFTSVTSTANSNTALSITTNNKDVALAGWRDWRYRHDPLYSSPVLNSYNAKRTVSRAPSIKSSHSSSSLTLFPGLKSKESFAQLSEGKSSDNGNNGKRQRSNSSVSSITNSLMSSLYNGSHISLNTTLSGSDNNSSKTQSKGKSSSSPGNPNDSSGEQDSIISSSSQIDTNTFGMTSSKSTSSTSNWFRMKLHGNGTRKLRLRSNKAISSKKDEQQNEESAQTAQKIETPIIKRTEPFSTPHPYTNKFLLKYAQYKDLPLGYILHILDHCPYLYILDLSNLTLCTDFEIIEGRRYKGRKQRFGSSRALPVVQESVISTDVPNDLDVIYLTDSSKTYEYYDRLRNTNKHKRSSSSNNLWSIPNQGWSDAPAPIGSHKNDLRRTHSQTIGRSNVELRKLNASEIFEHIATNQKSAYNTHLRVYMKNVLWCTQDMVKSFVLENFDQQAENLGEDKSSEMFIHDMNFSFENSGLNRNFVWTCEGNLQEFIAMVVLDEVNRKDDLEIENLFNIKAERILTPTNGPERAPEVHYISNVFTVSYGFQSNKKREMKFRVTILKTDTPMYFSIKKLADDYTSVVIKLQTNKNVALHGSETADIITTDQGSVLPEDVPEDNNADDTNNGENTIAQPFSNDPKERIERITQEIVARLKDLRGSDLRRNIGENNYVRERFLL.

Residues 29–63 (VSAKHRPSSTGVYGHDASTVDHASRSNNNLNLTRS) form a disordered region. Low complexity predominate over residues 53-63 (RSNNNLNLTRS). The region spanning 146-193 (RKEISDLPDEVLRNILSNVKDDQRTLVNCLYVNKAFYNATKPTLYERP) is the F-box domain. Residues 346–358 (LSEGKSSDNGNNG) show a composition bias toward polar residues. Disordered regions lie at residues 346-369 (LSEG…SVSS), 389-450 (TLSG…SNWF), 470-500 (ISSK…TEPF), and 863-893 (SVLP…SNDP). Composition is skewed to low complexity over residues 395–431 (NNSS…SQID) and 438–447 (TSSKSTSSTS). Residues 876 to 890 (DDTNNGENTIAQPFS) are compositionally biased toward polar residues.

Its function is as follows. F-box protein probably involved in ubiquitin conjugation pathway. The chain is F-box protein COS111 (COS111) from Candida glabrata (strain ATCC 2001 / BCRC 20586 / JCM 3761 / NBRC 0622 / NRRL Y-65 / CBS 138) (Yeast).